We begin with the raw amino-acid sequence, 625 residues long: Probable potassium transport system protein Kup 2 (625 aa).

12 consecutive transmembrane segments (helical) span residues 15-35, 52-72, 98-118, 134-154, 164-184, 212-232, 246-266, 284-304, 336-356, 365-385, 394-414, and 417-437; these read LSFA…LYAF, ILSL…LVIV, GGWL…DGML, LSPN…FFLF, IGVY…ILGF, FALF…ALFA, WFAV…AFVL, FLPV…QAII, VYLP…VVIF, AYGI…GIIA, FKIL…AGNI, and LLTG…VMYT.

Belongs to the HAK/KUP transporter (TC 2.A.72) family.

Its subcellular location is the cell inner membrane. The enzyme catalyses K(+)(in) + H(+)(in) = K(+)(out) + H(+)(out). In terms of biological role, transport of potassium into the cell. Likely operates as a K(+):H(+) symporter. The protein is Probable potassium transport system protein Kup 2 of Legionella pneumophila (strain Paris).